The sequence spans 325 residues: Apoptosis-enhancing nuclease (325 aa).

The short motif at 27 to 35 is the Nucleolar localization signal element; that stretch reads RKRHKRRSR. The tract at residues 53 to 105 is disordered; the sequence is LSMPPEPGSSPLPTPFGAVTATEDASSGKQCPRAGSGGAPCSRRPAPGKASGP. A compositionally biased stretch (pro residues) spans 56–66; the sequence is PPEPGSSPLPT. Positions 110-266 constitute an Exonuclease domain; sequence CVAIDCEMVG…EDATTAMELY (157 aa). The Nuclear localization signal motif lies at 165–188; that stretch reads RQHMCKAIPFQVAQKEILKLLKGK. The disordered stretch occupies residues 281-325; that stretch reads LWTCPEDREPDSSTDMEQYMEDQYWPDDLAHGSRGGAREAQDRRN. Over residues 308–325 the composition is skewed to basic and acidic residues; sequence DLAHGSRGGAREAQDRRN.

The protein resides in the nucleus. The protein localises to the nucleolus. Functionally, exonuclease with activity against single- and double-stranded DNA and RNA. Mediates p53-induced apoptosis. When induced by p53 following DNA damage, digests double-stranded DNA to form single-stranded DNA and amplifies DNA damage signals, leading to enhancement of apoptosis. The chain is Apoptosis-enhancing nuclease (AEN) from Pongo abelii (Sumatran orangutan).